Here is a 374-residue protein sequence, read N- to C-terminus: Cell wall integrity and stress response component 1 (374 aa).

The first 29 residues, 1 to 29 (MVFLNSSPFKGRLLFFVYLLIISTRLVAA), serve as a signal peptide directing secretion. Over 30 to 292 (DMNTQYGCYL…SNHTSLNAGA (263 aa)) the chain is Extracellular. Residues 31–119 (MNTQYGCYLV…DLYWSVYLTG (89 aa)) enclose the WSC domain. Residues 132-236 (VSSTTSSSSS…SSSSSSRPSS (105 aa)) form a disordered region. Asparagine 278 and asparagine 284 each carry an N-linked (GlcNAc...) asparagine glycan. Residues 293–313 (IVGIVIGCVAFAVVMALCIFL) traverse the membrane as a helical segment. Residues 314 to 374 (YFYFRRFKIR…RKILRVTNLN (61 aa)) lie on the Cytoplasmic side of the membrane. Serine 354 is modified (phosphoserine).

Post-translationally, O-mannosylated.

The protein localises to the membrane. This Schizosaccharomyces pombe (strain 972 / ATCC 24843) (Fission yeast) protein is Cell wall integrity and stress response component 1 (wsc1).